Consider the following 188-residue polypeptide: Elongation factor P (188 aa).

The protein belongs to the elongation factor P family.

The protein resides in the cytoplasm. Its pathway is protein biosynthesis; polypeptide chain elongation. Its function is as follows. Involved in peptide bond synthesis. Stimulates efficient translation and peptide-bond synthesis on native or reconstituted 70S ribosomes in vitro. Probably functions indirectly by altering the affinity of the ribosome for aminoacyl-tRNA, thus increasing their reactivity as acceptors for peptidyl transferase. The chain is Elongation factor P from Chlorobaculum parvum (strain DSM 263 / NCIMB 8327) (Chlorobium vibrioforme subsp. thiosulfatophilum).